The chain runs to 222 residues: Thiopurine S-methyltransferase (222 aa).

S-adenosyl-L-methionine contacts are provided by Trp10, Leu45, Glu66, and Arg124.

It belongs to the class I-like SAM-binding methyltransferase superfamily. TPMT family.

It is found in the cytoplasm. It carries out the reaction S-adenosyl-L-methionine + a thiopurine = S-adenosyl-L-homocysteine + a thiopurine S-methylether.. This chain is Thiopurine S-methyltransferase, found in Methylococcus capsulatus (strain ATCC 33009 / NCIMB 11132 / Bath).